A 273-amino-acid polypeptide reads, in one-letter code: Zinc finger protein 80 (273 aa).

C2H2-type zinc fingers lie at residues 49–71 and 77–99; these read YKCKECGSVFNKNSLLVRHQQIH and YECQECGKAFPEKVDFVRPMRIH. The C2H2-type 3; atypical zinc finger occupies 105-127; it reads CKCVECGKVFNRRSHLLCYRQIH. C2H2-type zinc fingers lie at residues 133 to 155, 161 to 183, 189 to 211, and 217 to 239; these read YECSECGKTFSYHSVFIQHRVTH, FGCKECGKTFYYNSSLTRHMKIH, CKCSECGKTFTYRSVFFRHSMTH, and YECKECGKGFYYSYSLTRHTRSH.

The protein belongs to the krueppel C2H2-type zinc-finger protein family.

It localises to the nucleus. In terms of biological role, may be involved in transcriptional regulation. This is Zinc finger protein 80 (ZNF80) from Homo sapiens (Human).